Reading from the N-terminus, the 460-residue chain is tRNA modification GTPase MnmE (460 aa).

Arg29, Glu89, and Arg128 together coordinate (6S)-5-formyl-5,6,7,8-tetrahydrofolate. The region spanning 224–382 (GVPTVIIGKP…LKQNLLEIIQ (159 aa)) is the TrmE-type G domain. Asn234 contributes to the K(+) binding site. GTP-binding positions include 234–239 (NAGKST), 253–259 (SEIAGTT), and 278–281 (DTAG). Ser238 contributes to the Mg(2+) binding site. Residues Ser253, Ile255, and Thr258 each coordinate K(+). Thr259 provides a ligand contact to Mg(2+). A (6S)-5-formyl-5,6,7,8-tetrahydrofolate-binding site is contributed by Lys460.

Belongs to the TRAFAC class TrmE-Era-EngA-EngB-Septin-like GTPase superfamily. TrmE GTPase family. As to quaternary structure, homodimer. Heterotetramer of two MnmE and two MnmG subunits. K(+) is required as a cofactor.

Its subcellular location is the cytoplasm. Functionally, exhibits a very high intrinsic GTPase hydrolysis rate. Involved in the addition of a carboxymethylaminomethyl (cmnm) group at the wobble position (U34) of certain tRNAs, forming tRNA-cmnm(5)s(2)U34. The chain is tRNA modification GTPase MnmE from Cytophaga hutchinsonii (strain ATCC 33406 / DSM 1761 / CIP 103989 / NBRC 15051 / NCIMB 9469 / D465).